The sequence spans 485 residues: Glutamate--tRNA ligase 2 (485 aa).

The short motif at 10–20 (PSPTGPIHIGN) is the 'HIGH' region element. Residues 252–256 (KLSKR) carry the 'KMSKS' region motif. K255 contributes to the ATP binding site.

The protein belongs to the class-I aminoacyl-tRNA synthetase family. Glutamate--tRNA ligase type 1 subfamily. Monomer.

The protein localises to the cytoplasm. It carries out the reaction tRNA(Glu) + L-glutamate + ATP = L-glutamyl-tRNA(Glu) + AMP + diphosphate. Its function is as follows. Catalyzes the attachment of glutamate to tRNA(Glu) in a two-step reaction: glutamate is first activated by ATP to form Glu-AMP and then transferred to the acceptor end of tRNA(Glu). This is Glutamate--tRNA ligase 2 from Caldanaerobacter subterraneus subsp. tengcongensis (strain DSM 15242 / JCM 11007 / NBRC 100824 / MB4) (Thermoanaerobacter tengcongensis).